The following is a 56-amino-acid chain: UPF0434 protein Sden_2197 (56 aa).

It belongs to the UPF0434 family.

The sequence is that of UPF0434 protein Sden_2197 from Shewanella denitrificans (strain OS217 / ATCC BAA-1090 / DSM 15013).